The chain runs to 95 residues: Phosphoribosyl-ATP pyrophosphatase (95 aa).

It belongs to the PRA-PH family.

The protein localises to the cytoplasm. It catalyses the reaction 1-(5-phospho-beta-D-ribosyl)-ATP + H2O = 1-(5-phospho-beta-D-ribosyl)-5'-AMP + diphosphate + H(+). The protein operates within amino-acid biosynthesis; L-histidine biosynthesis; L-histidine from 5-phospho-alpha-D-ribose 1-diphosphate: step 2/9. In Sulfolobus acidocaldarius (strain ATCC 33909 / DSM 639 / JCM 8929 / NBRC 15157 / NCIMB 11770), this protein is Phosphoribosyl-ATP pyrophosphatase.